The sequence spans 397 residues: Succinyl-diaminopimelate desuccinylase (397 aa).

H73 is a Zn(2+) binding site. D75 is an active-site residue. Position 106 (D106) interacts with Zn(2+). Catalysis depends on E140, which acts as the Proton acceptor. Zn(2+) is bound by residues E141, E169, and H366.

Belongs to the peptidase M20A family. DapE subfamily. In terms of assembly, homodimer. Zn(2+) serves as cofactor. It depends on Co(2+) as a cofactor.

It carries out the reaction N-succinyl-(2S,6S)-2,6-diaminopimelate + H2O = (2S,6S)-2,6-diaminopimelate + succinate. The protein operates within amino-acid biosynthesis; L-lysine biosynthesis via DAP pathway; LL-2,6-diaminopimelate from (S)-tetrahydrodipicolinate (succinylase route): step 3/3. In terms of biological role, catalyzes the hydrolysis of N-succinyl-L,L-diaminopimelic acid (SDAP), forming succinate and LL-2,6-diaminopimelate (DAP), an intermediate involved in the bacterial biosynthesis of lysine and meso-diaminopimelic acid, an essential component of bacterial cell walls. The sequence is that of Succinyl-diaminopimelate desuccinylase from Rhizobium etli (strain ATCC 51251 / DSM 11541 / JCM 21823 / NBRC 15573 / CFN 42).